A 758-amino-acid polypeptide reads, in one-letter code: Microtubule-associated protein tau (758 aa).

Residues 1–26 (MAEPHQEFDVTEDHAGTYGLGDRKDQ) show a composition bias toward basic and acidic residues. Residues 1–573 (MAEPHQEFDV…PVPMPDLKNV (573 aa)) form a disordered region. Residue alanine 2 is modified to N-acetylalanine. A phosphotyrosine mark is found at tyrosine 18 and tyrosine 29. A Glycyl lysine isopeptide (Lys-Gly) (interchain with G-Cter in ubiquitin) cross-link involves residue lysine 44. Residues serine 46 and serine 61 each carry the phosphoserine modification. Residues 61–71 (SETSDAKSTPT) show a composition bias toward polar residues. Residues threonine 69, threonine 71, and threonine 111 each carry the phosphothreonine modification. Composition is skewed to basic and acidic residues over residues 179-189 (EGGRHAPELLK) and 207-216 (GGKERPGSKE). The residue at position 214 (serine 214) is a Phosphoserine. Over residues 217 to 228 (EVDEDRDVDESS) the composition is skewed to acidic residues. Residues 314–323 (EQAHSEEHLR) are compositionally biased toward basic and acidic residues. Residues 325 to 340 (AAFPGAPGEGPEAQGP) are compositionally biased toward low complexity. Basic and acidic residues-rich tracts occupy residues 344 to 356 (EDAK…EPSE) and 381 to 393 (KSKD…DKKA). Positions 440 to 452 (KYVSSVTPRTGSS) are enriched in polar residues. Residues 455–466 (KEMKLKGADGKT) are compositionally biased toward basic and acidic residues. Threonine 470 carries the phosphothreonine modification. Omega-N-methylarginine is present on arginine 472. Lysine 480 bears the N6,N6-dimethyllysine; alternate mark. The residue at position 480 (lysine 480) is an N6-acetyllysine; alternate. Phosphothreonine occurs at positions 486, 492, and 498. A compositionally biased stretch (pro residues) spans 491 to 503 (KTPPAPKTPPSSG). A phosphoserine mark is found at serine 502, serine 508, and serine 512. A compositionally biased stretch (low complexity) spans 504-531 (EPPKSGDRSGYSSPGSPGTPGSRSRTPS). Tyrosine 514 carries the post-translational modification Phosphotyrosine. 3 positions are modified to phosphoserine: serine 515, serine 516, and serine 519. 2 positions are modified to phosphothreonine: threonine 522 and threonine 529. Serine 531 bears the Phosphoserine mark. Threonine 534 bears the Phosphothreonine mark. Lysine 542 carries the post-translational modification N6-acetyllysine. Threonine 548 is subject to Phosphothreonine. A phosphoserine mark is found at serine 552 and serine 554. Tau/MAP repeat units lie at residues 561-591 (QTAP…GGGK), 592-622 (VQII…GGGS), 623-653 (VQIV…GGGQ), and 654-685 (VEVK…GGGH). Lysine 571 participates in a covalent cross-link: Glycyl lysine isopeptide (Lys-Gly) (interchain with G-Cter in ubiquitin). N6-acetyllysine; alternate is present on lysine 576. Lysine 576 is subject to N6-methyllysine; alternate. Residue lysine 576 forms a Glycyl lysine isopeptide (Lys-Gly) (interchain with G-Cter in ubiquitin); alternate linkage. Serine 579 carries the phosphoserine modification. Residue lysine 584 forms a Glycyl lysine isopeptide (Lys-Gly) (interchain with G-Cter in ubiquitin) linkage. Lysine 598 bears the N6-acetyllysine; alternate mark. Residue lysine 598 forms a Glycyl lysine isopeptide (Lys-Gly) (interchain with G-Cter in ubiquitin); alternate linkage. A phosphoserine mark is found at serine 602 and serine 606. Lysine 607 is subject to N6-acetyllysine. A Phosphoserine modification is found at serine 610. Lysine 615 carries the N6-acetyllysine; alternate modification. Residue lysine 615 forms a Glycyl lysine isopeptide (Lys-Gly) (interchain with G-Cter in ubiquitin); alternate linkage. Serine 622 is modified (phosphoserine). An N6,N6-dimethyllysine; alternate modification is found at lysine 628. Lysine 628, lysine 634, and lysine 638 each carry N6-acetyllysine; alternate. Residues lysine 628, lysine 634, and lysine 638 each participate in a glycyl lysine isopeptide (Lys-Gly) (interchain with G-Cter in ubiquitin); alternate cross-link. The residue at position 641 (serine 641) is a Phosphoserine. 3 positions are modified to N6-acetyllysine; alternate: lysine 648, lysine 660, and lysine 664. Glycyl lysine isopeptide (Lys-Gly) (interchain with G-Cter in ubiquitin); alternate cross-links involve residues lysine 648, lysine 660, and lysine 664. Arginine 666 is modified (omega-N-methylarginine). Serine 669 is modified (phosphoserine). Lysine 670 is covalently cross-linked (Glycyl lysine isopeptide (Lys-Gly) (interchain with G-Cter in ubiquitin)). Serine 673 carries the post-translational modification Phosphoserine. An N6-acetyllysine; alternate modification is found at lysine 686. A Glycyl lysine isopeptide (Lys-Gly) (interchain with G-Cter in ubiquitin); alternate cross-link involves residue lysine 686. Lysine 692 participates in a covalent cross-link: Glycyl lysine isopeptide (Lys-Gly) (interchain with G-Cter in ubiquitin). N6-acetyllysine; alternate is present on lysine 702. Residue lysine 702 forms a Glycyl lysine isopeptide (Lys-Gly) (interchain with G-Cter in ubiquitin); alternate linkage. A Phosphotyrosine modification is found at tyrosine 711. Phosphoserine is present on residues serine 713 and serine 717. The disordered stretch occupies residues 715 to 734 (VVSGDTSPRHLSNVSSTGSI). The segment covering 718–733 (GDTSPRHLSNVSSTGS) has biased composition (polar residues). The residue at position 720 (threonine 720) is a Phosphothreonine. Serine 721, serine 726, serine 733, and serine 739 each carry phosphoserine. Phosphothreonine is present on threonine 744.

In terms of assembly, interacts with MARK1, MARK2, MARK3 and MARK4. Interacts with SQSTM1 when polyubiquitinated. Interacts with PSMC2 through SQSTM1. Interacts with FKBP4. Binds to CSNK1D. Interacts with SGK1. Interacts with EPM2A; the interaction dephosphorylates MAPT at Ser-396. Interacts with PIN1. Interacts with LRRK2. Interacts with LRP1, leading to endocytosis; this interaction is reduced in the presence of LRPAP1/RAP. Post-translationally, polyubiquitinated. Requires functional TRAF6 and may provoke SQSTM1-dependent degradation by the proteasome. Phosphorylation at various serine and threonine residues in S-P or T-P motifs by proline-directed protein kinases (PDPK1, CDK1, CDK5, GSK3, MAPK) (a few sites per protein in interphase, more in mitosis), and at serine residues in K-X-G-S motifs by MAP/microtubule affinity-regulating kinase (MARK1, MARK2, MARK3 or MARK4), causing detachment from microtubules, and their disassembly. Phosphorylation at Ser-579 by BRSK1 and BRSK2 in neurons affects ability to bind microtubules and plays a role in neuron polarization. Phosphorylated by PHK. Dephosphorylation at several serine and threonine residues by the serine/threonine phosphatase PPP5C. Phosphorylation at Ser-214 by SGK1 mediates microtubule depolymerization and neurite formation in hippocampal neurons.

It localises to the cytoplasm. It is found in the cytosol. The protein resides in the cell membrane. Its subcellular location is the cytoskeleton. The protein localises to the cell projection. It localises to the axon. It is found in the dendrite. Promotes microtubule assembly and stability, and might be involved in the establishment and maintenance of neuronal polarity. The C-terminus binds axonal microtubules while the N-terminus binds neural plasma membrane components, suggesting that tau functions as a linker protein between both. Axonal polarity is predetermined by tau localization (in the neuronal cell) in the domain of the cell body defined by the centrosome. The short isoforms allow plasticity of the cytoskeleton whereas the longer isoforms may preferentially play a role in its stabilization. This is Microtubule-associated protein tau (MAPT) from Pongo pygmaeus (Bornean orangutan).